The chain runs to 392 residues: Erythronate-4-phosphate dehydrogenase (392 aa).

Residues serine 48 and threonine 69 each contribute to the substrate site. Aspartate 149 is a binding site for NAD(+). The active site involves arginine 215. Aspartate 239 serves as a coordination point for NAD(+). Glutamate 244 is an active-site residue. Histidine 261 (proton donor) is an active-site residue. Residue glycine 264 coordinates NAD(+). Tyrosine 265 is a substrate binding site.

It belongs to the D-isomer specific 2-hydroxyacid dehydrogenase family. PdxB subfamily. In terms of assembly, homodimer.

The protein resides in the cytoplasm. It carries out the reaction 4-phospho-D-erythronate + NAD(+) = (R)-3-hydroxy-2-oxo-4-phosphooxybutanoate + NADH + H(+). It functions in the pathway cofactor biosynthesis; pyridoxine 5'-phosphate biosynthesis; pyridoxine 5'-phosphate from D-erythrose 4-phosphate: step 2/5. Functionally, catalyzes the oxidation of erythronate-4-phosphate to 3-hydroxy-2-oxo-4-phosphonooxybutanoate. The sequence is that of Erythronate-4-phosphate dehydrogenase from Salinibacter ruber (strain DSM 13855 / M31).